Consider the following 753-residue polypeptide: Lysyl oxidase homolog 3 (753 aa).

A signal peptide spans Met1–Gly25. 2 SRCR domains span residues Phe44 to Lys145 and Val169 to Val282. Intrachain disulfides connect Cys70–Cys134, Cys83–Cys144, Cys114–Cys124, Cys201–Cys271, Cys214–Cys281, and Cys248–Cys258. N-linked (GlcNAc...) asparagine glycosylation is present at Asn111. Residue Asn266 is glycosylated (N-linked (GlcNAc...) asparagine). Over residues Ser290 to Gln302 the composition is skewed to low complexity. The tract at residues Ser290 to Pro315 is disordered. 2 consecutive SRCR domains span residues Val307–Asn407 and Ile417–Ser525. Disulfide bonds link Cys332–Cys396, Cys345–Cys406, Cys376–Cys386, Cys446–Cys511, Cys459–Cys524, Cys492–Cys502, Cys554–Cys560, Cys606–Cys654, Cys638–Cys644, Cys666–Cys676, and Cys713–Cys727. Residues Asn390 and Asn481 are each glycosylated (N-linked (GlcNAc...) asparagine). The lysyl-oxidase like stretch occupies residues Ser529–Ala732. Cu cation contacts are provided by His607, His609, and His611. An N-linked (GlcNAc...) asparagine glycan is attached at Asn625. Residues Lys634–Tyr670 constitute a cross-link (lysine tyrosylquinone (Lys-Tyr)). Tyr670 carries the post-translational modification 2',4',5'-topaquinone.

Belongs to the lysyl oxidase family. Interacts with STAT3. Requires Cu cation as cofactor. The cofactor is lysine tyrosylquinone residue. Post-translationally, the lysine tyrosylquinone cross-link (LTQ) is generated by condensation of the epsilon-amino group of a lysine with a topaquinone produced by oxidation of tyrosine. In terms of tissue distribution, isoform 1: Predominantly detected in the heart, placenta, lung, and small intestine. Isoform 2: Highly detected in the kidney, pancreas, spleen, and thymus, and is absent in lung. In eye, present in all layers of corneas as well as in the limbus and conjunctiva (at protein level).

The protein localises to the secreted. It localises to the extracellular space. It is found in the cytoplasm. The protein resides in the nucleus. It carries out the reaction L-lysyl-[protein] + O2 + H2O = (S)-2-amino-6-oxohexanoyl-[protein] + H2O2 + NH4(+). The enzyme catalyses N(6)-acetyl-L-lysyl-[protein] + O2 + H2O = acetamide + (S)-2-amino-6-oxohexanoyl-[protein] + H2O2. In terms of biological role, protein-lysine 6-oxidase that mediates the oxidation of peptidyl lysine residues to allysine in target proteins. Catalyzes the post-translational oxidative deamination of peptidyl lysine residues in precursors of elastin and different types of collagens, a prerequisite in the formation of cross-links between collagens and elastin. Required for somite boundary formation by catalyzing oxidation of fibronectin (FN1), enhancing integrin signaling in myofibers and their adhesion to the myotendinous junction (MTJ). Acts as a regulator of inflammatory response by inhibiting differentiation of naive CD4(+) T-cells into T-helper Th17 or regulatory T-cells (Treg): acts by interacting with STAT3 in the nucleus and catalyzing both deacetylation and oxidation of lysine residues on STAT3, leading to disrupt STAT3 dimerization and inhibit STAT3 transcription activity. Oxidation of lysine residues to allysine on STAT3 preferentially takes place on lysine residues that are acetylated. Also able to catalyze deacetylation of lysine residues on STAT3. Its function is as follows. Shows protein-lysine 6-oxidase activity toward elastin and different types of collagens, with the highest activity toward collagen type VIII. Functionally, shows protein-lysine 6-oxidase activity toward elastin and different types of collagens, with the highest activity toward collagen type IV. This Homo sapiens (Human) protein is Lysyl oxidase homolog 3.